The following is a 148-amino-acid chain: Oleosin 1 (148 aa).

The residue at position 2 (alanine 2) is an N-acetylalanine. A polar region spans residues alanine 2 to lysine 28. The hydrophobic stretch occupies residues alanine 29–serine 148. The next 2 helical transmembrane spans lie at glycine 37 to alanine 57 and glycine 81 to lysine 101.

It belongs to the oleosin family.

The protein localises to the lipid droplet. It is found in the membrane. In terms of biological role, may have a structural role to stabilize the lipid body during desiccation of the seed by preventing coalescence of the oil. Probably interacts with both lipid and phospholipid moieties of lipid bodies. May also provide recognition signals for specific lipase anchorage in lipolysis during seedling growth. The chain is Oleosin 1 (OLE1) from Prunus dulcis (Almond).